The sequence spans 287 residues: Co-chaperone protein DjlA (287 aa).

Residues 1-6 (MNFIGK) lie on the Periplasmic side of the membrane. A helical transmembrane segment spans residues 7–30 (FLGLIIGWKLGGFFGAICGVILGH). Residues 31–287 (LGDKKLYELG…DLICKTKGWK (257 aa)) are Cytoplasmic-facing. The J domain occupies 221–287 (DAYKVLGVSA…DLICKTKGWK (67 aa)).

In terms of assembly, homodimer.

The protein localises to the cell inner membrane. Functionally, regulatory DnaK co-chaperone. Direct interaction between DnaK and DjlA is needed for the induction of the wcaABCDE operon, involved in the synthesis of a colanic acid polysaccharide capsule, possibly through activation of the RcsB/RcsC phosphotransfer signaling pathway. The colanic acid capsule may help the bacterium survive conditions outside the host. This Pasteurella multocida (strain Pm70) protein is Co-chaperone protein DjlA.